A 192-amino-acid polypeptide reads, in one-letter code: CASP-like protein 2U1 (192 aa).

The Cytoplasmic segment spans residues methionine 1 to glycine 11. Residues leucine 12–leucine 32 traverse the membrane as a helical segment. The Extracellular segment spans residues leucine 33 to serine 58. A helical membrane pass occupies residues glycine 59–valine 79. At serine 80–arginine 96 the chain is on the cytoplasmic side. The chain crosses the membrane as a helical span at residues tryptophan 97–alanine 117. Over threonine 118–histidine 145 the chain is Extracellular. Residues methionine 146–valine 166 form a helical membrane-spanning segment. At serine 167 to threonine 192 the chain is on the cytoplasmic side.

It belongs to the Casparian strip membrane proteins (CASP) family. As to quaternary structure, homodimer and heterodimers.

It localises to the cell membrane. This chain is CASP-like protein 2U1, found in Adiantum capillus-veneris (Maidenhair fern).